We begin with the raw amino-acid sequence, 119 residues long: Immunoglobulin heavy variable 2-70D (119 aa).

The first 19 residues, 1–19, serve as a signal peptide directing secretion; that stretch reads MDILCSTLLLLTVPSWVLS. A Pyrrolidone carboxylic acid modification is found at glutamine 20. Residues 20–44 form a framework-1 region; sequence QVTLKESGPALVKPTQTLTLTCTFS. The 100-residue stretch at 20-119 folds into the Ig-like domain; that stretch reads QVTLKESGPA…DTATYYCARI (100 aa). Residues cysteine 41 and cysteine 116 are joined by a disulfide bond. The tract at residues 45-54 is complementarity-determining-1; that stretch reads GFSLSTSGMR. The framework-2 stretch occupies residues 55–71; it reads VSWIRQPPGKALEWLAR. A complementarity-determining-2 region spans residues 72 to 78; sequence IDWDDDK. Residues 79-116 form a framework-3 region; sequence FYSTSLKTRLTISKDTSKNQVVLTMTNMDPVDTATYYC. Residues 117-119 are complementarity-determining-3; it reads ARI.

Immunoglobulins are composed of two identical heavy chains and two identical light chains; disulfide-linked.

It localises to the secreted. The protein resides in the cell membrane. Functionally, v region of the variable domain of immunoglobulin heavy chains that participates in the antigen recognition. Immunoglobulins, also known as antibodies, are membrane-bound or secreted glycoproteins produced by B lymphocytes. In the recognition phase of humoral immunity, the membrane-bound immunoglobulins serve as receptors which, upon binding of a specific antigen, trigger the clonal expansion and differentiation of B lymphocytes into immunoglobulins-secreting plasma cells. Secreted immunoglobulins mediate the effector phase of humoral immunity, which results in the elimination of bound antigens. The antigen binding site is formed by the variable domain of one heavy chain, together with that of its associated light chain. Thus, each immunoglobulin has two antigen binding sites with remarkable affinity for a particular antigen. The variable domains are assembled by a process called V-(D)-J rearrangement and can then be subjected to somatic hypermutations which, after exposure to antigen and selection, allow affinity maturation for a particular antigen. The chain is Immunoglobulin heavy variable 2-70D from Homo sapiens (Human).